Here is a 1616-residue protein sequence, read N- to C-terminus: MAYTQTATTSALLDTVRGNNSLVNDLAKRRLYDTAVEEFNARDRRPKVNFSKVISEEQTLIATRAYPEFQITFYNTQNAVHSLAGGLRSLELEYLMMQIPYGSLTYDIGGNFASHLFKGRAYVHCCMPNLDVRDIMRHEGQKDSIELYLSRLERGGKTVPNFQKEAFDRYAEIPEDAVCHNTFQTCEHQPMQQSGRVYAIALHSIYDIPADEFGAALLRKNVHTCYAAFHFSENLLLEDSYVNLDEINACFSRDGDKLTFSFASESTLNYCHSYSNILKYVCKTYFPASNREVYMKEFLVTRVNTWFCKFSRIDTFLLYKGVAHKSVDSEQFYTAMEDAWHYKKTLAMCNSERILLEDSSSVNYWFPKMRDMVIVPLFDISLETSKRTRKEVLVSKDFVFTVLNHIRTYQAKALTYANVLSFVESIRSRVIINGVTARSEWDVDKSLLQSLSMTFYLHTKLAVLKDDLLISKFSLGSKTVCQHVWDEISLAFGNAFPSVKERLLNRKLIRVAGDALEIRVPDLYVTFHDRLVTEYKASVDMPALDIRKKMEETEVMYNALSELSVLRESDKFDVDVFSQMCKSLEVDPMTAAKVIVADMSNESGLTLTFERPTEANVALALQDQEKASEGALVVTSREVEEPSMKGSMARGELQLAGLAGDHPESSYSKNEEIESLEQFHMATADSLIRKQMSSIVYTGPIKVQQMKNFIDSLVASLSAAVSNLVKILKDTAAIDLETRQKFGVLDVASRKWLIKPTAKSHAWGVVETHARKYHVALLEYDEQGVVTCDDWRRVAVSSESVVYSDMAKLRTLRRLLRNGEPHVSSAKVVLVDGVPGCGKTKEILSRVNFDEDLILVPGKQAAEMIRRRANSSGIIVATKDNVKTVDSFMMNFGKSTRCQFKRLFIDEGLMLHTGCVNFLVAMSLCEIAYVYGDTQQIPYINRVSGFPYPAHFAKLEVDEVETRRTTLRCPADVTHYLNRRYEGFVMSTSSVKKSVSQEMVGGAAVINPISKPSHGKILTFTQSDKEALLSRGYSDVHTVHEVQGETYSDVSLVRLTPTPVSIIAGDSPHVLVALSRHTCSLKYYTVVMDPLVSIIRDLEKLSSYLSDMYKVDAGTQXQLQIDSVFKGSNLFVAAPKTGDISDMQFYYDKCLPGNSTMMNNFDAVTMRLTDISLNVKDCILDMSKSVAAPKDQIKPLIPMVRTAAEMPRQTGLLENLVAMIKRNFNAPELSGIIDIENTASLVVDKFFDSYLLKEKRKPNKNVSLFSRESLNRWLEKQEQVTIGQLADFDFVDLPAVDQYRHMIKAQPKQKLDTSIQTEYPALQTIVYHSKKISAIFGPLFSELTRQLLDSVDSSRFLFFTRKTPAQIEDFFGDLDSHVPMDVLELDISKYDKSQNEFHCAVEYEIWRRLGFEDFLGEVWKQGHRKTTLKDYTAGIKTCIWYQRKSGDVTTFIGNTVIIAACLASMLPMEKIIKGAFCGDDSLLYFPKGCEFPDVQHSANLMWNFEAKLFKKQYGYFCGRYVIHHDRGCIVYYDPLKLISKLGAKHIKDWEHLEEFRRSLCDVAVSLNNCAYYTQLDDAVWEVHKTAPPGSFVYKSLVKYLSDKVLFRSLFIDGSSC.

Residues 50–458 form a methyltransferase region; that stretch reads FSKVISEEQT…QSLSMTFYLH (409 aa). Positions 72–281 constitute an Alphavirus-like MT domain; it reads TFYNTQNAVH…HSYSNILKYV (210 aa). Positions 801 to 963 constitute a (+)RNA virus helicase ATP-binding domain; sequence VVYSDMAKLR…KLEVDEVETR (163 aa). Residues 830–1085 form a helicase region; the sequence is LVDGVPGCGK…RHTCSLKYYT (256 aa). Position 833 to 840 (833 to 840) interacts with ATP; sequence GVPGCGKT. Positions 964 to 1116 constitute a (+)RNA virus helicase C-terminal domain; that stretch reads RTTLRCPADV…DMYKVDAGTQ (153 aa). The RdRp catalytic domain maps to 1380–1493; sequence MDVLELDISK…YFPKGCEFPD (114 aa).

It belongs to the ssRNA positive-strand viruses RNA-directed RNA polymerase family. As to quaternary structure, heterodimer of a large and a small subunit.

It catalyses the reaction RNA(n) + a ribonucleoside 5'-triphosphate = RNA(n+1) + diphosphate. The catalysed reaction is ATP + H2O = ADP + phosphate + H(+). Functionally, is an RNA-dependent RNA polymerase active in viral RNA replication. Its function is as follows. Is a methyltransferase active in RNA capping and an RNA helicase. Methyltransferase displays a cytoplasmic capping enzyme activity. This function is necessary since all viral RNAs are synthesized in the cytoplasm, and host capping enzymes are restricted to the nucleus. Helicase region probably exhibits NTPase and RNA unwinding activities (Potential). It also acts as a suppressor of RNA-mediated gene silencing, also known as post-transcriptional gene silencing (PTGS), a mechanism of plant viral defense that limits the accumulation of viral RNAs. May mediate silencing suppression through either inhibition of HEN1-mediated siRNA or siRNA demethylation. The polypeptide is Replicase large subunit (Nicotiana tabacum (Common tobacco)).